The following is a 157-amino-acid chain: GDP-mannose mannosyl hydrolase (157 aa).

Substrate is bound by residues 2 to 3 (FL), Phe-8, and Arg-36. Residues 3–153 (LRQEDFAAVV…SRAYFSPDAP (151 aa)) form the Nudix hydrolase domain. Mg(2+)-binding residues include Gly-49, Glu-69, and Gln-122. The Nudix box motif lies at 50–71 (GRVCKDETLEAAFARLTQAELG).

Belongs to the Nudix hydrolase family. In terms of assembly, homodimer. It depends on Mg(2+) as a cofactor.

It catalyses the reaction GDP-alpha-D-mannose + H2O = D-mannose + GDP + H(+). Functionally, hydrolyzes GDP-mannose. This Salmonella typhi protein is GDP-mannose mannosyl hydrolase.